Reading from the N-terminus, the 59-residue chain is Photosystem II reaction center protein K (59 aa).

Positions 1–22 (MLNIFSLICLNSALYSSSFFFG) are excised as a propeptide. The helical transmembrane segment at 30 to 50 (FLSPIVDFMPVIPLFFFLLAF) threads the bilayer.

PSII is composed of 1 copy each of membrane proteins PsbA, PsbB, PsbC, PsbD, PsbE, PsbF, PsbH, PsbI, PsbJ, PsbK, PsbL, PsbM, PsbT, PsbX, PsbY, PsbZ, Psb30/Ycf12, at least 3 peripheral proteins of the oxygen-evolving complex and a large number of cofactors. It forms dimeric complexes. This protein, PsbL and plastoquinone-9 are found in PSII dimers but not seen in PSII monomers.

Its subcellular location is the plastid. It localises to the chloroplast thylakoid membrane. Its function is as follows. One of the components of the core complex of photosystem II (PSII). PSII is a light-driven water:plastoquinone oxidoreductase that uses light energy to abstract electrons from H(2)O, generating O(2) and a proton gradient subsequently used for ATP formation. It consists of a core antenna complex that captures photons, and an electron transfer chain that converts photonic excitation into a charge separation. May be involved in PSII dimerization. One of the components of the core complex of photosystem II (PSII). PSII is a light-driven water:plastoquinone oxidoreductase that uses light energy to abstract electrons from H(2)O, generating O(2) and a proton gradient subsequently used for ATP formation. It consists of a core antenna complex that captures photons, and an electron transfer chain that converts photonic excitation into a charge separation. In Spinacia oleracea (Spinach), this protein is Photosystem II reaction center protein K.